The chain runs to 62 residues: Photosystem II reaction center protein Z (62 aa).

The next 2 helical transmembrane spans lie at 8-28 (LVLLLITLSTILVVGVPVVLA) and 41-61 (YTGAGLWTGLVIVTSLVNSLV).

Belongs to the PsbZ family. In terms of assembly, PSII is composed of 1 copy each of membrane proteins PsbA, PsbB, PsbC, PsbD, PsbE, PsbF, PsbH, PsbI, PsbJ, PsbK, PsbL, PsbM, PsbT, PsbX, PsbY, PsbZ, Psb30/Ycf12, at least 3 peripheral proteins of the oxygen-evolving complex and a large number of cofactors. It forms dimeric complexes.

The protein localises to the plastid. Its subcellular location is the chloroplast thylakoid membrane. May control the interaction of photosystem II (PSII) cores with the light-harvesting antenna, regulates electron flow through the 2 photosystem reaction centers. PSII is a light-driven water plastoquinone oxidoreductase, using light energy to abstract electrons from H(2)O, generating a proton gradient subsequently used for ATP formation. This Porphyra purpurea (Red seaweed) protein is Photosystem II reaction center protein Z.